A 289-amino-acid chain; its full sequence is Zinc finger matrin-type protein 3 (289 aa).

The segment at 1–42 (MILLQHAVLPPPKQPSPSPPMSVATRSTGTLQLPPQKPFGQE) is disordered. Residues 9–20 (LPPPKQPSPSPP) show a composition bias toward pro residues. Positions 24–33 (ATRSTGTLQL) are enriched in polar residues. Matrin-type zinc fingers lie at residues 70–100 (LYCK…KLRN) and 147–177 (DYCK…RLRL). The span at 180–191 (AQSNSFSESSEL) shows a compositional bias: polar residues. The disordered stretch occupies residues 180-201 (AQSNSFSESSELGQRRARKEGN). The segment at 246 to 276 (FYCSMCNVGAGEEMEFRQHLESKQHKSKVSE) adopts a Matrin-type 3 zinc-finger fold.

In terms of assembly, interacts with dsRNA. As to expression, highly expressed in adult brain, and moderately in adult kidney and testis. Not detected in fetal brain, heart, pancreas, adrenal gland, liver or small intestine.

Its subcellular location is the nucleus. The protein resides in the nucleolus. Acts as a bona fide target gene of p53/TP53. May play a role in the TP53-dependent growth regulatory pathway. May contribute to TP53-mediated apoptosis by regulation of TP53 expression and translocation to the nucleus and nucleolus. In Homo sapiens (Human), this protein is Zinc finger matrin-type protein 3.